Consider the following 222-residue polypeptide: Peptide methionine sulfoxide reductase MsrA (222 aa).

Residue Cys-55 is part of the active site.

It belongs to the MsrA Met sulfoxide reductase family.

The enzyme catalyses L-methionyl-[protein] + [thioredoxin]-disulfide + H2O = L-methionyl-(S)-S-oxide-[protein] + [thioredoxin]-dithiol. It catalyses the reaction [thioredoxin]-disulfide + L-methionine + H2O = L-methionine (S)-S-oxide + [thioredoxin]-dithiol. In terms of biological role, has an important function as a repair enzyme for proteins that have been inactivated by oxidation. Catalyzes the reversible oxidation-reduction of methionine sulfoxide in proteins to methionine. The polypeptide is Peptide methionine sulfoxide reductase MsrA (Streptomyces griseus subsp. griseus (strain JCM 4626 / CBS 651.72 / NBRC 13350 / KCC S-0626 / ISP 5235)).